Here is a 307-residue protein sequence, read N- to C-terminus: Ras-related protein Rab-33 (307 aa).

The disordered stretch occupies residues 19–80; that stretch reads VIDPPKHVTA…IPPAPEAVTA (62 aa). 2 stretches are compositionally biased toward pro residues: residues 42–56 and 65–75; these read PTHP…PAVP and PTAPPPIPPAP. Residue 107–114 participates in GTP binding; that stretch reads GNAAVGKT. Residues 129–137 carry the Effector region motif; it reads TEATIGVDF. Residues 155–159 and 217–220 contribute to the GTP site; these read DTAGQ and NKCD. S-geranylgeranyl cysteine attachment occurs at residues cysteine 306 and cysteine 307.

Belongs to the small GTPase superfamily. Rab family.

Its subcellular location is the cell membrane. The sequence is that of Ras-related protein Rab-33 (rab-33) from Caenorhabditis elegans.